The chain runs to 137 residues: Small ribosomal subunit protein uS9 (137 aa).

The protein belongs to the universal ribosomal protein uS9 family.

The protein is Small ribosomal subunit protein uS9 (rps9) of Saccharolobus solfataricus (strain ATCC 35092 / DSM 1617 / JCM 11322 / P2) (Sulfolobus solfataricus).